The primary structure comprises 382 residues: Fimbrial usher domain-containing protein YdeT (382 aa).

This is Fimbrial usher domain-containing protein YdeT (ydeT) from Escherichia coli O157:H7.